The chain runs to 388 residues: Mannitol-1-phosphate 5-dehydrogenase (388 aa).

5–16 (AIQFGGGNIGRG) provides a ligand contact to NAD(+). K213 is a catalytic residue.

It belongs to the mannitol dehydrogenase family. Monomer.

It catalyses the reaction D-mannitol 1-phosphate + NAD(+) = beta-D-fructose 6-phosphate + NADH + H(+). In terms of biological role, catalyzes the NAD(H)-dependent interconversion of D-fructose 6-phosphate and D-mannitol 1-phosphate in the metabolism of mannitol. Has a strong preference for NADH over NADPH. The protein is Mannitol-1-phosphate 5-dehydrogenase (mpdA) of Aspergillus niger (strain ATCC MYA-4892 / CBS 513.88 / FGSC A1513).